Consider the following 529-residue polypeptide: Sodium/hydrogen exchanger 4 (529 aa).

The Cytoplasmic portion of the chain corresponds to 1-19; sequence MSIGLTEFVTNKLAAEHPQ. A helical membrane pass occupies residues 20-40; that stretch reads VIPISVFIAILCLCLVIGHLL. At 41 to 45 the chain is on the vacuolar side; the sequence is EENRW. The chain crosses the membrane as a helical span at residues 46–66; it reads VNESITAILVGAASGTVILLI. Topologically, residues 67–73 are cytoplasmic; it reads SKGKSSH. Positions 74-94 form an intramembrane region, helical; sequence ILVFDEELFFIYLLPPIIFNA. At 95–112 the chain is on the cytoplasmic side; it reads GFQVKKKKFFHNFLTIMS. Residues 113-133 traverse the membrane as a helical segment; that stretch reads FGVIGVFISTVIISFGTWWLF. The Vacuolar segment spans residues 134–171; it reads PKLGFKGLSARDYLAIGTIFSSTDTVCTLQILHQDETP. A helical membrane pass occupies residues 172-192; sequence LLYSLVFGEGVVNDATSVVLF. The Cytoplasmic segment spans residues 193 to 214; sequence NAVQKIQFESLTGWTALQVFGN. Residues 215–235 form a helical membrane-spanning segment; sequence FLYLFSTSTLLGIGVGLITSF. The Vacuolar segment spans residues 236–250; that stretch reads VLKTLYFGRHSTTRE. The chain crosses the membrane as a helical span at residues 251 to 267; sequence LAIMVLMAYLSYMLAEL. Over 268 to 273 the chain is Cytoplasmic; it reads FSLSGI. A helical transmembrane segment spans residues 274-291; it reads LTVFFCGVLMSHYASYNV. Residues 292–301 lie on the Vacuolar side of the membrane; that stretch reads TESSRITSRH. The helical transmembrane segment at 302–322 threads the bilayer; sequence VFAMLSFIAETFIFLYVGTDA. Topologically, residues 323–342 are cytoplasmic; it reads LDFTKWKTSSLSFGGTLGVS. Residues 343-363 form a helical membrane-spanning segment; that stretch reads GVITALVLLGRAAFVFPLSVL. Topologically, residues 364 to 380 are vacuolar; that stretch reads TNFMNRHTERNESITFK. The N-linked (GlcNAc...) asparagine glycan is linked to Asn374. Residues 381 to 401 form a helical membrane-spanning segment; that stretch reads HQVIIWWAGLMRGAVSIALAF. The Cytoplasmic segment spans residues 402–415; that stretch reads KQFTYSGVTLDPVN. Residues 416-436 traverse the membrane as a helical segment; it reads AAMVTNTTIVVLFTTLVFGFL. At 437-529 the chain is on the vacuolar side; it reads TKPLVNYLLP…GPRRENQPEC (93 aa).

This sequence belongs to the monovalent cation:proton antiporter 1 (CPA1) transporter (TC 2.A.36) family. Expressed at very low levels in roots and shoots.

It localises to the vacuole membrane. The enzyme catalyses Na(+)(in) + H(+)(out) = Na(+)(out) + H(+)(in). It catalyses the reaction K(+)(in) + H(+)(out) = K(+)(out) + H(+)(in). Functionally, may act in low affinity electroneutral exchange of protons for cations such as Na(+) or K(+) across membranes. May also exchange Li(+) and Cs(+) with a lower affinity. In Arabidopsis thaliana (Mouse-ear cress), this protein is Sodium/hydrogen exchanger 4 (NHX4).